Here is a 747-residue protein sequence, read N- to C-terminus: Asparagine synthetase [glutamine-hydrolyzing] 2 (747 aa).

The active-site For GATase activity is the cysteine 2. Residues 2 to 218 form the Glutamine amidotransferase type-2 domain; sequence CGLAGIINLA…AGHYLEINLT (217 aa). L-glutamine-binding positions include 52–56, 77–79, and aspartate 100; these read RLSIL and NGE. Residue 395 to 396 coordinates ATP; sequence SP.

The protein belongs to the asparagine synthetase family.

The enzyme catalyses L-aspartate + L-glutamine + ATP + H2O = L-asparagine + L-glutamate + AMP + diphosphate + H(+). The protein operates within amino-acid biosynthesis; L-asparagine biosynthesis; L-asparagine from L-aspartate (L-Gln route): step 1/1. The sequence is that of Asparagine synthetase [glutamine-hydrolyzing] 2 (asnH) from Bacillus subtilis (strain 168).